A 360-amino-acid chain; its full sequence is Phospho-N-acetylmuramoyl-pentapeptide-transferase (360 aa).

10 consecutive transmembrane segments (helical) span residues Ile27 to Trp47, Thr71 to Ala91, Tyr97 to Tyr117, Trp132 to Gly152, Val168 to Ser188, Gly199 to Thr219, Ala236 to Phe256, Val263 to Leu283, Phe288 to Val308, and Val338 to Lys358.

Belongs to the glycosyltransferase 4 family. MraY subfamily. Requires Mg(2+) as cofactor.

Its subcellular location is the cell inner membrane. The catalysed reaction is UDP-N-acetyl-alpha-D-muramoyl-L-alanyl-gamma-D-glutamyl-meso-2,6-diaminopimeloyl-D-alanyl-D-alanine + di-trans,octa-cis-undecaprenyl phosphate = di-trans,octa-cis-undecaprenyl diphospho-N-acetyl-alpha-D-muramoyl-L-alanyl-D-glutamyl-meso-2,6-diaminopimeloyl-D-alanyl-D-alanine + UMP. It participates in cell wall biogenesis; peptidoglycan biosynthesis. Catalyzes the initial step of the lipid cycle reactions in the biosynthesis of the cell wall peptidoglycan: transfers peptidoglycan precursor phospho-MurNAc-pentapeptide from UDP-MurNAc-pentapeptide onto the lipid carrier undecaprenyl phosphate, yielding undecaprenyl-pyrophosphoryl-MurNAc-pentapeptide, known as lipid I. This chain is Phospho-N-acetylmuramoyl-pentapeptide-transferase, found in Proteus mirabilis (strain HI4320).